A 314-amino-acid polypeptide reads, in one-letter code: Ferrochelatase (314 aa).

Residues H184 and E259 each contribute to the Fe cation site.

The protein belongs to the ferrochelatase family.

The protein resides in the cytoplasm. It carries out the reaction heme b + 2 H(+) = protoporphyrin IX + Fe(2+). It participates in porphyrin-containing compound metabolism; protoheme biosynthesis; protoheme from protoporphyrin-IX: step 1/1. In terms of biological role, catalyzes the ferrous insertion into protoporphyrin IX. The chain is Ferrochelatase from Chlamydia trachomatis serovar D (strain ATCC VR-885 / DSM 19411 / UW-3/Cx).